The primary structure comprises 360 residues: Aminomethyltransferase (360 aa).

The protein belongs to the GcvT family. As to quaternary structure, the glycine cleavage system is composed of four proteins: P, T, L and H.

It carries out the reaction N(6)-[(R)-S(8)-aminomethyldihydrolipoyl]-L-lysyl-[protein] + (6S)-5,6,7,8-tetrahydrofolate = N(6)-[(R)-dihydrolipoyl]-L-lysyl-[protein] + (6R)-5,10-methylene-5,6,7,8-tetrahydrofolate + NH4(+). The glycine cleavage system catalyzes the degradation of glycine. The protein is Aminomethyltransferase of Bdellovibrio bacteriovorus (strain ATCC 15356 / DSM 50701 / NCIMB 9529 / HD100).